The sequence spans 260 residues: MTRAGMERWRDRLALVTGASGGIGAAVARALVQQGLKVVGCARTVGNIEELAAECKSAGYPGTLIPYRCDLSNEEDILSMFSAVRSQHSGVDICINNAGMARPDTLLSGSTSGWKDMFNVNVLALSICTREAYQSMKERNIDDGHIININSMCGHRVPPQSVIHFYSATKYAVTALTEGLRQELLEAQTHIRATCISPGLVETQFAFKLHDKDPGEAAATYEHIKCLRPEDVAEAVIYVLSTPPHVQVGDIQMRPTEQVT.

A signal peptide spans 1-30 (MTRAGMERWRDRLALVTGASGGIGAAVARA). NADP(+)-binding positions include 18-23 (GASGGI), 43-44 (RT), glutamate 49, 70-71 (DL), and asparagine 97. Positions 151 and 166 each coordinate substrate. NADP(+)-binding positions include tyrosine 166, lysine 170, 201-204 (VETQ), and lysine 208. The active-site Proton acceptor is the tyrosine 166.

It belongs to the short-chain dehydrogenases/reductases (SDR) family. In terms of assembly, homotetramer.

The protein localises to the secreted. It carries out the reaction a 3beta-hydroxysteroid + NADP(+) = a 3-oxosteroid + NADPH + H(+). The catalysed reaction is 17beta-estradiol + NAD(+) = estrone + NADH + H(+). The enzyme catalyses 17beta-estradiol + NADP(+) = estrone + NADPH + H(+). It participates in steroid biosynthesis; estrogen biosynthesis. Inhibited by flavonoids including apigenin, luteolin, genistein, kaempferol and quercetin and also by carbenoxolone, zearalenone, glycyrrhetinic, curcumin and flufenamic acid. In terms of biological role, catalyzes the conversion of the 17-keto group of estrone, 4- and 5-androstenes and 5-alpha-androstanes into their 17-beta-hydroxyl metabolites and the conversion of the 3-keto group of 3-, 3,17- and 3,20- diketosteroids into their 3-hydroxyl metabolites. Exhibits reductive 3-beta-hydroxysteroid dehydrogenase activity toward 5-beta-androstanes, 5-beta-pregnanes, 4-pregnenes and bile acids. May also reduce endogenous and exogenous alpha-dicarbonyl compounds and xenobiotic alicyclic ketones. The chain is Dehydrogenase/reductase SDR family member 11 (Dhrs11) from Mus musculus (Mouse).